A 474-amino-acid polypeptide reads, in one-letter code: tRNA-2-methylthio-N(6)-dimethylallyladenosine synthase (474 aa).

Residues 3–120 (KKLHIKTWGC…LPEMINHVQG (118 aa)) enclose the MTTase N-terminal domain. The [4Fe-4S] cluster site is built by Cys-12, Cys-49, Cys-83, Cys-157, Cys-161, and Cys-164. Residues 143-375 (RAEGPTAFVS…QQRISQQAME (233 aa)) form the Radical SAM core domain. One can recognise a TRAM domain in the interval 378–441 (RKMVGTVQRV…ASSLRGILLR (64 aa)).

It belongs to the methylthiotransferase family. MiaB subfamily. As to quaternary structure, monomer. [4Fe-4S] cluster serves as cofactor.

It is found in the cytoplasm. It carries out the reaction N(6)-dimethylallyladenosine(37) in tRNA + (sulfur carrier)-SH + AH2 + 2 S-adenosyl-L-methionine = 2-methylsulfanyl-N(6)-dimethylallyladenosine(37) in tRNA + (sulfur carrier)-H + 5'-deoxyadenosine + L-methionine + A + S-adenosyl-L-homocysteine + 2 H(+). Functionally, catalyzes the methylthiolation of N6-(dimethylallyl)adenosine (i(6)A), leading to the formation of 2-methylthio-N6-(dimethylallyl)adenosine (ms(2)i(6)A) at position 37 in tRNAs that read codons beginning with uridine. This Yersinia pestis bv. Antiqua (strain Angola) protein is tRNA-2-methylthio-N(6)-dimethylallyladenosine synthase.